Here is a 969-residue protein sequence, read N- to C-terminus: Rab3 GTPase-activating protein catalytic subunit (969 aa).

Over residues 532-549 the composition is skewed to basic and acidic residues; it reads DDGKKSSSSDGARDRSRG. The disordered stretch occupies residues 532 to 613; the sequence is DDGKKSSSSD…PEGRLQPHGT (82 aa). Over residues 550–572 the composition is skewed to low complexity; that stretch reads APEGAGPEGAGPAEAAGKSWDSW. Residues 573–589 are compositionally biased toward acidic residues; it reads SDSEDEFFECVSDTEEM. The span at 590–608 shows a compositional bias: basic and acidic residues; sequence KEDKEEAENRSRSKPEGRL.

Belongs to the Rab3-GAP catalytic subunit family. The Rab3 GTPase-activating complex is a heterodimer composed of rab3gap1 and rab3gap2. The Rab3 GTPase-activating complex interacts with DMXL2. Interacts with LMAN1.

It is found in the cytoplasm. Its subcellular location is the endoplasmic reticulum. It localises to the golgi apparatus. The protein localises to the cis-Golgi network. Functionally, catalytic subunit of the Rab3 GTPase-activating (Rab3GAP) complex composed of rab3gap1 and rab3gap2, which has GTPase-activating protein (GAP) activity towards various Rab3 subfamily members (RAB3A, RAB3B, RAB3C and RAB3D), RAB5A and RAB43, and guanine nucleotide exchange factor (GEF) activity towards RAB18. As part of the Rab3GAP complex, acts as a GAP for Rab3 proteins by converting active RAB3-GTP to the inactive form RAB3-GDP. Rab3 proteins are involved in regulated exocytosis of neurotransmitters and hormones. The Rab3GAP complex, acts as a GEF for RAB18 by promoting the conversion of inactive RAB18-GDP to the active form RAB18-GTP. Recruits and stabilizes RAB18 at the cis-Golgi membrane where RAB18 is most likely activated. Also involved in RAB18 recruitment at the endoplasmic reticulum (ER) membrane where it maintains proper ER structure. Required for normal eye and brain development. May participate in neurodevelopmental processes such as proliferation, migration and differentiation before synapse formation, and non-synaptic vesicular release of neurotransmitters. The chain is Rab3 GTPase-activating protein catalytic subunit (rab3gap1) from Danio rerio (Zebrafish).